Reading from the N-terminus, the 611-residue chain is Chaperone protein DnaK (611 aa).

T173 bears the Phosphothreonine; by autocatalysis mark. Residues Q577–A592 show a composition bias toward low complexity. Residues Q577–N598 are disordered.

The protein belongs to the heat shock protein 70 family.

Functionally, acts as a chaperone. This Bacillus anthracis (strain A0248) protein is Chaperone protein DnaK.